We begin with the raw amino-acid sequence, 97 residues long: Co-chaperonin GroES (97 aa).

Belongs to the GroES chaperonin family. Heptamer of 7 subunits arranged in a ring. Interacts with the chaperonin GroEL.

Its subcellular location is the cytoplasm. Together with the chaperonin GroEL, plays an essential role in assisting protein folding. The GroEL-GroES system forms a nano-cage that allows encapsulation of the non-native substrate proteins and provides a physical environment optimized to promote and accelerate protein folding. GroES binds to the apical surface of the GroEL ring, thereby capping the opening of the GroEL channel. In Pseudarthrobacter chlorophenolicus (strain ATCC 700700 / DSM 12829 / CIP 107037 / JCM 12360 / KCTC 9906 / NCIMB 13794 / A6) (Arthrobacter chlorophenolicus), this protein is Co-chaperonin GroES.